We begin with the raw amino-acid sequence, 281 residues long: 40S small subunit processome assembly factor 1 (281 aa).

The segment at 29–141 (LGETEGETEQ…DEDEPAKNKT (113 aa)) is disordered. Residues serine 67 and serine 75 each carry the phosphoserine modification. Lysine 172 is modified (N6-acetyllysine). The tract at residues 221–254 (ETDIFKKKKKKGRGQEDRRSKKSAPSILSSGQVG) is disordered. Serine 267 is subject to Phosphoserine.

Part of the small subunit (SSU) processome, composed of more than 70 proteins and the RNA chaperone small nucleolar RNA (snoRNA) U3.

Its subcellular location is the chromosome. The protein localises to the nucleus. It is found in the nucleolus. Part of the small subunit (SSU) processome, first precursor of the small eukaryotic ribosomal subunit. During the assembly of the SSU processome in the nucleolus, many ribosome biogenesis factors, an RNA chaperone and ribosomal proteins associate with the nascent pre-rRNA and work in concert to generate RNA folding, modifications, rearrangements and cleavage as well as targeted degradation of pre-ribosomal RNA by the RNA exosome. Prevents helicase DHX37 to be recruited before post-A1 state. The sequence is that of 40S small subunit processome assembly factor 1 from Mus musculus (Mouse).